Reading from the N-terminus, the 1104-residue chain is Isoleucine--tRNA ligase (1104 aa).

Positions 48-58 (PYTTGRIHLGT) match the 'HIGH' region motif. The 'KMSKS' region motif lies at 644-648 (KMSKS). Lys-647 lines the ATP pocket.

It belongs to the class-I aminoacyl-tRNA synthetase family. IleS type 2 subfamily. Monomer. The cofactor is Zn(2+).

The protein localises to the cytoplasm. It catalyses the reaction tRNA(Ile) + L-isoleucine + ATP = L-isoleucyl-tRNA(Ile) + AMP + diphosphate. Its function is as follows. Catalyzes the attachment of isoleucine to tRNA(Ile). As IleRS can inadvertently accommodate and process structurally similar amino acids such as valine, to avoid such errors it has two additional distinct tRNA(Ile)-dependent editing activities. One activity is designated as 'pretransfer' editing and involves the hydrolysis of activated Val-AMP. The other activity is designated 'posttransfer' editing and involves deacylation of mischarged Val-tRNA(Ile). The polypeptide is Isoleucine--tRNA ligase (Methanocella arvoryzae (strain DSM 22066 / NBRC 105507 / MRE50)).